Consider the following 445-residue polypeptide: von Willebrand factor A domain-containing protein 1 (445 aa).

Residues 1 to 22 form the signal peptide; it reads MLPWTALGLALSLRLALARSGA. Residues 34–213 enclose the VWFA domain; it reads DLMFLLDSSA…ELRGSILDAM (180 aa). 2 positions are modified to phosphoserine; by FAM20C: Ser74 and Ser80. Tyr83 is subject to Phosphotyrosine. Ser93 is modified (phosphoserine; by FAM20C). The 91-residue stretch at 214–304 folds into the Fibronectin type-III 1 domain; sequence RPQQLHATEI…QILRVRTRPG (91 aa). Asn264 is a glycosylation site (N-linked (GlcNAc...) asparagine). Disordered regions lie at residues 302–325 and 411–445; these read RPGEAGPGASGPESGAGPAPTQLA and RESALSAKACTPDGPRPRPRPVPRAPTPGTASREP. Low complexity predominate over residues 311–325; it reads SGPESGAGPAPTQLA. The 94-residue stretch at 334–427 folds into the Fibronectin type-III 2 domain; it reads GPERIVISHA…KACTPDGPRP (94 aa).

As to quaternary structure, homodimer or homomultimer; disulfide-linked. Interacts with HSPG2. Post-translationally, N-glycosylated.

Its subcellular location is the secreted. It localises to the extracellular space. The protein resides in the extracellular matrix. It is found in the basement membrane. Functionally, promotes matrix assembly. Involved in the organization of skeletal muscles and in the formation of neuromuscular junctions. This is von Willebrand factor A domain-containing protein 1 from Homo sapiens (Human).